Consider the following 351-residue polypeptide: Matrix protein (351 aa).

It belongs to the morbillivirus/respirovirus/rubulavirus M protein family.

Its subcellular location is the virion. Plays a crucial role in virus assembly and interacts with the RNP complex as well as with the viral membrane. The polypeptide is Matrix protein (M) (Bos taurus (Bovine)).